A 240-amino-acid polypeptide reads, in one-letter code: Pyridoxine 5'-phosphate synthase (240 aa).

Residue Asn7 participates in 3-amino-2-oxopropyl phosphate binding. Residue 9-10 coordinates 1-deoxy-D-xylulose 5-phosphate; sequence DH. Residue Arg18 participates in 3-amino-2-oxopropyl phosphate binding. The Proton acceptor role is filled by His43. 1-deoxy-D-xylulose 5-phosphate-binding residues include Arg45 and His50. The Proton acceptor role is filled by Glu70. Thr100 is a 1-deoxy-D-xylulose 5-phosphate binding site. The active-site Proton donor is the His191. 3-amino-2-oxopropyl phosphate is bound by residues Gly192 and 213-214; that span reads GH.

This sequence belongs to the PNP synthase family. In terms of assembly, homooctamer; tetramer of dimers.

It is found in the cytoplasm. It carries out the reaction 3-amino-2-oxopropyl phosphate + 1-deoxy-D-xylulose 5-phosphate = pyridoxine 5'-phosphate + phosphate + 2 H2O + H(+). It participates in cofactor biosynthesis; pyridoxine 5'-phosphate biosynthesis; pyridoxine 5'-phosphate from D-erythrose 4-phosphate: step 5/5. Functionally, catalyzes the complicated ring closure reaction between the two acyclic compounds 1-deoxy-D-xylulose-5-phosphate (DXP) and 3-amino-2-oxopropyl phosphate (1-amino-acetone-3-phosphate or AAP) to form pyridoxine 5'-phosphate (PNP) and inorganic phosphate. The sequence is that of Pyridoxine 5'-phosphate synthase from Acaryochloris marina (strain MBIC 11017).